A 1205-amino-acid polypeptide reads, in one-letter code: Solute carrier family 12 member 2 (1205 aa).

Met-1 carries the N-acetylmethionine modification. The span at 1–22 (MEPGPARPRLAPAARPGWGRAA) shows a compositional bias: low complexity. Residues 1-102 (MEPGPARPRL…AAAAAAAAAA (102 aa)) form a disordered region. Topologically, residues 1 to 279 (MEPGPARPRL…AESKGVVKFG (279 aa)) are cytoplasmic. Over residues 23–35 (GCRRRGGPARHGR) the composition is skewed to basic residues. Ser-74 and Ser-76 each carry phosphoserine. The short motif at 77-80 (RFQV) is the RFXV motif 1 element. Over residues 87 to 102 (AGRAAAAAAAAAAAAA) the composition is skewed to low complexity. Residues 133-136 (RFRV) carry the RFXV motif 2 motif. A compositionally biased stretch (low complexity) spans 143–155 (ASSSADDSLSDAA). Residues 143 to 187 (ASSSADDSLSDAAGVGGDGPNVSFQNGGDTVLSEGSSLHSGGGSG) are disordered. Phosphothreonine is present on residues Thr-196, Thr-200, Thr-205, Thr-210, and Thr-223. Ser-235 is modified (phosphoserine). Thr-259 carries the phosphothreonine modification. The chain crosses the membrane as a discontinuously helical span at residues 280–309 (WIKGVLVRCMLNIWGVMLFIRLSWIVGQAG). Leu-290 is a Na(+) binding site. Asn-291 and Ile-292 together coordinate K(+). Na(+) is bound at residue Trp-293. Residues Gly-294, Val-295, and Met-296 each contribute to the chloride site. Residues 310-329 (IGLSVVVIAMATVVTTITGL) traverse the membrane as a helical segment. Over 330-360 (STSAIATNGFVRGGGAYYLISRSLGPEFGGA) the chain is Cytoplasmic. The chain crosses the membrane as a helical span at residues 361–388 (IGLIFAFANAVAVAMYVVGFAETVVELL). Phe-365 lines the chloride pocket. Tyr-376 is a K(+) binding site. Over 389–398 (KEHSILMIDE) the chain is Extracellular. Residues 399–422 (INDIRIIGAITVVILLGISVAGME) traverse the membrane as a helical segment. Residues 423–425 (WEA) are Cytoplasmic-facing. A helical membrane pass occupies residues 426 to 447 (KAQIVLLVILLLAIADFVIGTF). The Extracellular portion of the chain corresponds to 448–479 (ISLESKKPKGFFGYKSEIFNENFGPDFREEET). A discontinuously helical membrane pass occupies residues 480–497 (FFSVFAIFFPAATGILAG). K(+)-binding residues include Pro-489, Ala-490, and Thr-492. Residues Pro-489 and Ala-490 each coordinate chloride. Chloride-binding residues include Gly-493 and Ile-494. Residues 498–512 (ANISGDLADPQSAIP) lie on the Cytoplasmic side of the membrane. Residues 513 to 534 (KGTLLAILITTVVYIGIAVSVG) form a helical membrane-spanning segment. The Extracellular segment spans residues 535 to 591 (SCVVRDATGNVNDTITTELTNCTSAACKLNFDFSYCESNTCSYGLMNNFQVMSMVSG). Asn-546 and Asn-555 each carry an N-linked (GlcNAc...) asparagine glycan. 2 disulfides stabilise this stretch: Cys-556–Cys-561 and Cys-570–Cys-575. Residues 592 to 616 (FAPLISAGIFSATLSSALASLVSAP) form a helical membrane-spanning segment. Na(+) contacts are provided by Ala-603, Ser-606, and Ser-607. Over 617–644 (KIFQALCKDNIYPAFQMFAKGYGKNNEP) the chain is Cytoplasmic. 2 helical membrane-spanning segments follow: residues 645-665 (LRGYILTFLIALGFILIAELN) and 666-684 (VIAPIISNFFLASYALINF). The chloride site is built by Phe-675 and Tyr-679. Residues 685 to 707 (SVFHASLAKSPGWRPAFKYYNMW) are Cytoplasmic-facing. Transmembrane regions (helical) follow at residues 708 to 725 (ISLIGAILCCIVMFVINW) and 726 to 738 (WAALLTYVIVLGL). Topologically, residues 739-1205 (YIYVTYKKPD…NHQSVLTFYS (467 aa)) are cytoplasmic. Positions 754-771 (STQALTYLSALQHSIRLS) are scissor helix. 2 positions are modified to phosphoserine: Ser-933 and Ser-937. The interval 953 to 986 (SDQDTCKSSGEKSITQKDEEEDGKTPTQPLLKKE) is disordered. Ser-987 bears the Phosphoserine mark.

The protein belongs to the SLC12A transporter family. As to quaternary structure, homodimer; adopts a domain-swap conformation at the scissor helices connecting the transmembrane domain and C-terminal domain. Phosphorylated at Thr-196, Thr-200 and Thr-205 by OXSR1/OSR1 and STK39/SPAK downstream of WNK kinases (WNK1, WNK2, WNK3 or WNK4), promoting its activity. Widely expressed. High expression found in the cochlea, cochlear lateral wall, and the choroid plexus. Lower expression found in the cerebellum and the cortex.

It localises to the basolateral cell membrane. It carries out the reaction K(+)(out) + 2 chloride(out) + Na(+)(out) = K(+)(in) + 2 chloride(in) + Na(+)(in). With respect to regulation, activated following phosphorylation by OXSR1/OSR1 and STK39/SPAK downstream of WNK kinases (WNK1, WNK2, WNK3 or WNK4). Inhibited by bumetanide and furosemide. In terms of biological role, cation-chloride cotransporter which mediates the electroneutral transport of chloride, potassium and/or sodium ions across the membrane. Plays a vital role in the regulation of ionic balance and cell volume. The polypeptide is Solute carrier family 12 member 2 (Slc12a2) (Mus musculus (Mouse)).